Here is an 897-residue protein sequence, read N- to C-terminus: Molybdenum import ATP-binding protein ModC 2 (897 aa).

Residues 6 to 236 (RGRIDAAFRG…PALPLAYSRD (231 aa)) enclose the ABC transporter domain. 38-45 (GPSGCGKT) is a binding site for ATP. One can recognise a Mop domain in the interval 295–365 (ESSILNILPA…VKGVSLVRAS (71 aa)). Positions 823 to 848 (LGDRSVLGPREPDAGAKGRKRQNDPE) are disordered. A compositionally biased stretch (basic and acidic residues) spans 832–848 (REPDAGAKGRKRQNDPE).

Belongs to the ABC transporter superfamily. Molybdate importer (TC 3.A.1.8) family. The complex is composed of two ATP-binding proteins (ModC), two transmembrane proteins (ModB) and a solute-binding protein (ModA).

It localises to the cell inner membrane. The enzyme catalyses molybdate(out) + ATP + H2O = molybdate(in) + ADP + phosphate + H(+). Functionally, part of the ABC transporter complex ModABC involved in molybdenum import. Responsible for energy coupling to the transport system. In Bradyrhizobium diazoefficiens (strain JCM 10833 / BCRC 13528 / IAM 13628 / NBRC 14792 / USDA 110), this protein is Molybdenum import ATP-binding protein ModC 2.